A 504-amino-acid polypeptide reads, in one-letter code: Anaerobic nitric oxide reductase transcription regulator NorR (504 aa).

D57 carries the 4-aspartylphosphate modification. In terms of domain architecture, Sigma-54 factor interaction spans 187 to 416 (MIGLSPGMTQ…LEHAIHRAVV (230 aa)). ATP-binding positions include 215–222 (GETGTGKE) and 278–287 (ADNGTLFLDE). The H-T-H motif DNA-binding region spans 479–498 (WAACARMLETDVANLHRLAK).

It functions in the pathway nitrogen metabolism; nitric oxide reduction. Its function is as follows. Required for the expression of anaerobic nitric oxide (NO) reductase, acts as a transcriptional activator for at least the norVW operon. Activation also requires sigma-54. The polypeptide is Anaerobic nitric oxide reductase transcription regulator NorR (Escherichia coli (strain 55989 / EAEC)).